We begin with the raw amino-acid sequence, 520 residues long: Cytosol aminopeptidase (520 aa).

Lys-286 and Asp-291 together coordinate Zn(2+). The active site involves Lys-298. The Zn(2+) site is built by Asp-309, Asp-368, and Glu-370. Residue Arg-372 is part of the active site.

The protein belongs to the peptidase M17 family. Homohexamer. The cofactor is Zn(2+).

It localises to the cytoplasm. It catalyses the reaction Release of an N-terminal amino acid, Xaa-|-Yaa-, in which Xaa is preferably Leu, but may be other amino acids including Pro although not Arg or Lys, and Yaa may be Pro. Amino acid amides and methyl esters are also readily hydrolyzed, but rates on arylamides are exceedingly low.. It carries out the reaction Release of N-terminal proline from a peptide.. Functionally, presumably involved in the processing and regular turnover of intracellular proteins. Catalyzes the removal of unsubstituted N-terminal amino acids from various peptides. The sequence is that of Cytosol aminopeptidase (lap) from Dictyostelium discoideum (Social amoeba).